The primary structure comprises 185 residues: Ribose 1,5-bisphosphate phosphokinase PhnN (185 aa).

10–17 (GPSGSGKD) contacts ATP.

It belongs to the ribose 1,5-bisphosphokinase family.

The catalysed reaction is alpha-D-ribose 1,5-bisphosphate + ATP = 5-phospho-alpha-D-ribose 1-diphosphate + ADP. Its pathway is metabolic intermediate biosynthesis; 5-phospho-alpha-D-ribose 1-diphosphate biosynthesis; 5-phospho-alpha-D-ribose 1-diphosphate from D-ribose 5-phosphate (route II): step 3/3. Catalyzes the phosphorylation of ribose 1,5-bisphosphate to 5-phospho-D-ribosyl alpha-1-diphosphate (PRPP). The sequence is that of Ribose 1,5-bisphosphate phosphokinase PhnN from Escherichia coli O157:H7.